A 103-amino-acid chain; its full sequence is Heme-copper oxidase subunit 4 (103 aa).

Helical transmembrane passes span 20–40, 42–62, and 75–95; these read VWIV…EGIA, NPFV…ALFF, and ITVS…TSVL.

Its subcellular location is the cell membrane. In Aeropyrum pernix (strain ATCC 700893 / DSM 11879 / JCM 9820 / NBRC 100138 / K1), this protein is Heme-copper oxidase subunit 4 (aoxC).